Consider the following 270-residue polypeptide: NAD kinase (270 aa).

D63 serves as the catalytic Proton acceptor. NAD(+)-binding positions include D63 to G64, N131 to E132, K142, R159, D161, T172 to S177, A196, and Q230.

It belongs to the NAD kinase family. Requires a divalent metal cation as cofactor.

The protein localises to the cytoplasm. The enzyme catalyses NAD(+) + ATP = ADP + NADP(+) + H(+). Involved in the regulation of the intracellular balance of NAD and NADP, and is a key enzyme in the biosynthesis of NADP. Catalyzes specifically the phosphorylation on 2'-hydroxyl of the adenosine moiety of NAD to yield NADP. This is NAD kinase from Methanoculleus marisnigri (strain ATCC 35101 / DSM 1498 / JR1).